Consider the following 817-residue polypeptide: Two pore calcium channel protein 1 (817 aa).

The Cytoplasmic segment spans residues 1–113 (MAVSLDDDVP…VHNHFFYMME (113 aa)). The segment at 20–65 (SAPLPPSNSLGQEQLPSKNGGSHSIHNSQVPSLVSGADSPPSSPTG) is disordered. Over residues 26-51 (SNSLGQEQLPSKNGGSHSIHNSQVPS) the composition is skewed to polar residues. Residues 114-134 (LLTALLLLLLSLCESPAVPVL) form a helical membrane-spanning segment. Topologically, residues 135–137 (KLH) are extracellular. A helical membrane pass occupies residues 138-158 (TYVHATLELFALMVVVFELCM). Residues 159-172 (KLRWLGFHTFVRHK) are Cytoplasmic-facing. Residues 173 to 193 (RTMVKTSVLVVQFIEAIVVLV) traverse the membrane as a helical segment. Residues 194 to 202 (RQTSHVRVT) are Extracellular-facing. A helical transmembrane segment spans residues 203 to 221 (RALRCIFLVDCRYCGGVRR). Over 222–235 (NLRQIFQSLPPFMD) the chain is Cytoplasmic. Residues 236 to 256 (ILLLLLFFMIIFAILGFYLFS) form a helical membrane-spanning segment. At 257-263 (TNPSDPY) the chain is on the extracellular side. Positions 264 to 287 (FSTLENSIVNLFVLLTTANFPDVM) form an intramembrane region, helical; Pore-forming. The Extracellular segment spans residues 288–298 (MPSYSRNPWSC). The chain crosses the membrane as a helical span at residues 299-319 (VFFIVYLSIELYFIMNLLLAV). Residues 320-445 (VFDTFNDIEK…NILVNSKAFQ (126 aa)) lie on the Cytoplasmic side of the membrane. Residues 446-466 (YFMYLVVAVNGVWILVETFML) traverse the membrane as a helical segment. The Extracellular segment spans residues 467–480 (KGGNFTSKHVPWSY). Asn470 carries an N-linked (GlcNAc...) asparagine glycan. A helical membrane pass occupies residues 481–501 (LVFLTIYGVELFMKVAGLGPV). Topologically, residues 502–504 (EYL) are cytoplasmic. A helical membrane pass occupies residues 505 to 527 (SSGWNLFDFSVTAFAFLGLLALT). Over 528–535 (LNMEPFYF) the chain is Extracellular. The helical transmembrane segment at 536-550 (IVVLRPLQLLRLFKL) threads the bilayer. At 551-569 (KKRYRNVLDTMFELLPRMA) the chain is on the cytoplasmic side. A helical membrane pass occupies residues 570 to 590 (SLGLTLLTFYYSFAIVGMEFF). Residues 591-630 (NGRLTPNCCNTSTVADAYRFINHTVGNKTKVEEGYYYLNN) are Extracellular-facing. Residues 631-654 (FDNILNSFVTLFELTVVNNWYIIM) constitute an intramembrane region (helical; Pore-forming). The Extracellular portion of the chain corresponds to 655–671 (EGVTSQTSHWSRLYFMT). The chain crosses the membrane as a helical span at residues 672–692 (FYIVTMVVMTIIVAFILEAFV). At 693–817 (FRMNYSRKSQ…GSRQRSQTVT (125 aa)) the chain is on the cytoplasmic side. The stretch at 770–794 (SLKMYQEEIQEWYEEHAREQEQQKL) forms a coiled coil. Residues 785–817 (HAREQEQQKLRGSVPGPAAQQPPGSRQRSQTVT) are disordered. The span at 806-817 (PPGSRQRSQTVT) shows a compositional bias: polar residues.

It belongs to the calcium channel alpha-1 subunit (TC 1.A.1.11) family. Two pore calcium channel subfamily. As to quaternary structure, dimer. Interacts with MTOR; the interaction is required for TPCN1 ATP sensitivity. Interacts with STX7, STX8 and STX12. Interacts with JPT2. Found in a complex with LSM12, TPCN1 and TPCN2. In terms of processing, N-glycosylated. In terms of tissue distribution, mainly expressed in epithelial tissues like lung, kidney, colon, spleen and liver (at protein level).

It is found in the lysosome membrane. Its subcellular location is the endosome membrane. It localises to the early endosome membrane. The protein resides in the recycling endosome membrane. The catalysed reaction is Na(+)(in) = Na(+)(out). The enzyme catalyses Ca(2+)(in) = Ca(2+)(out). Its activity is regulated as follows. Na(+) current is inhibited by ATP in a MTORC-dependent manner. ATP sensitivity is independent of PI(3,5)P2. Probably regulated by Mg(2+) ions, cytosolic Mg(2+) selectively inhibits outward current while lysosomal Mg(2+) modestly inhibits both the outward and inward currents. In the absence of Mg(2+), NAADP readily activates TPCN2, with properties similar to PI(3,5)P2. Both current elicited by PI(3,5)P2 as well as NAADP are inhibited by tetrandrine. In terms of biological role, intracellular channel initially characterized as a non-selective Ca(2+)-permeable channel activated by NAADP (nicotinic acid adenine dinucleotide phosphate), it is also a voltage-gated highly-selective Na(+) channel activated directly by PI(3,5)P2 (phosphatidylinositol 3,5-bisphosphate) that senses pH changes and confers electrical excitability to organelles. Localizes to the early and recycling endosomes membranes where it plays a role in the uptake and processing of proteins and regulates organellar membrane excitability, membrane trafficking and pH homeostasis. Ion selectivity is not fixed but rather agonist-dependent and under defined ionic conditions, can be readily activated by both NAADP and PI(3,5)P2. Required for mTOR-dependent nutrient sensing. The chain is Two pore calcium channel protein 1 from Mus musculus (Mouse).